The chain runs to 100 residues: Phosphoribosylformylglycinamidine synthase subunit PurS (100 aa).

The protein belongs to the PurS family. As to quaternary structure, homodimer. Part of the FGAM synthase complex composed of 1 PurL, 1 PurQ and 2 PurS subunits.

The protein resides in the cytoplasm. The catalysed reaction is N(2)-formyl-N(1)-(5-phospho-beta-D-ribosyl)glycinamide + L-glutamine + ATP + H2O = 2-formamido-N(1)-(5-O-phospho-beta-D-ribosyl)acetamidine + L-glutamate + ADP + phosphate + H(+). It functions in the pathway purine metabolism; IMP biosynthesis via de novo pathway; 5-amino-1-(5-phospho-D-ribosyl)imidazole from N(2)-formyl-N(1)-(5-phospho-D-ribosyl)glycinamide: step 1/2. Functionally, part of the phosphoribosylformylglycinamidine synthase complex involved in the purines biosynthetic pathway. Catalyzes the ATP-dependent conversion of formylglycinamide ribonucleotide (FGAR) and glutamine to yield formylglycinamidine ribonucleotide (FGAM) and glutamate. The FGAM synthase complex is composed of three subunits. PurQ produces an ammonia molecule by converting glutamine to glutamate. PurL transfers the ammonia molecule to FGAR to form FGAM in an ATP-dependent manner. PurS interacts with PurQ and PurL and is thought to assist in the transfer of the ammonia molecule from PurQ to PurL. The polypeptide is Phosphoribosylformylglycinamidine synthase subunit PurS (Synechocystis sp. (strain ATCC 27184 / PCC 6803 / Kazusa)).